The sequence spans 477 residues: tRNA-2-methylthio-N(6)-dimethylallyladenosine synthase (477 aa).

An MTTase N-terminal domain is found at 3–120 (KKLHIKTWGC…LPAMIKQVQE (118 aa)). Positions 12, 49, 83, 157, 161, and 164 each coordinate [4Fe-4S] cluster. The Radical SAM core domain maps to 143 to 375 (RAEGATAFVS…QHVINNQSMQ (233 aa)). Residues 378–441 (RAMLGSTQRI…PNSLRGRFIR (64 aa)) form the TRAM domain.

Belongs to the methylthiotransferase family. MiaB subfamily. In terms of assembly, monomer. It depends on [4Fe-4S] cluster as a cofactor.

It localises to the cytoplasm. It carries out the reaction N(6)-dimethylallyladenosine(37) in tRNA + (sulfur carrier)-SH + AH2 + 2 S-adenosyl-L-methionine = 2-methylsulfanyl-N(6)-dimethylallyladenosine(37) in tRNA + (sulfur carrier)-H + 5'-deoxyadenosine + L-methionine + A + S-adenosyl-L-homocysteine + 2 H(+). In terms of biological role, catalyzes the methylthiolation of N6-(dimethylallyl)adenosine (i(6)A), leading to the formation of 2-methylthio-N6-(dimethylallyl)adenosine (ms(2)i(6)A) at position 37 in tRNAs that read codons beginning with uridine. The protein is tRNA-2-methylthio-N(6)-dimethylallyladenosine synthase of Aeromonas salmonicida (strain A449).